We begin with the raw amino-acid sequence, 353 residues long: MKKIILTGGGSAGHVTPNLALIPKLKELGYEIQYIGTESGIEREIIENEKIKYHVISSGKLRRYFDIKNFTDPFKVIKGIFQAIFIMRKEKPNVVFSKGGFVSVPVVFAAYINGIPVIAHESDITPGLANRLSSPYCTKVCVTFPESVKSIKGDNAVLTGTPIRQELLDGSRIIGRRMCGFQNDKPVLLIIGGSLGSKFINNTVRNCLNELLKIYNIIHICGKGNLEEKLTERNGYVQFEYVSEEMPHIMNAADIVISRAGANVIFELLALKKPNLLIPLSRKSSRGDQILNAASFEKSGYSMVLKEEDMTPKLLLDKLKKLDMSKHTYINKMKASAVQDATNKIINLIEKYK.

UDP-N-acetyl-alpha-D-glucosamine-binding positions include 11-13 (SAG), Arg164, Ser194, and Gln289.

The protein belongs to the glycosyltransferase 28 family. MurG subfamily.

Its subcellular location is the cell membrane. It catalyses the reaction di-trans,octa-cis-undecaprenyl diphospho-N-acetyl-alpha-D-muramoyl-L-alanyl-D-glutamyl-meso-2,6-diaminopimeloyl-D-alanyl-D-alanine + UDP-N-acetyl-alpha-D-glucosamine = di-trans,octa-cis-undecaprenyl diphospho-[N-acetyl-alpha-D-glucosaminyl-(1-&gt;4)]-N-acetyl-alpha-D-muramoyl-L-alanyl-D-glutamyl-meso-2,6-diaminopimeloyl-D-alanyl-D-alanine + UDP + H(+). The protein operates within cell wall biogenesis; peptidoglycan biosynthesis. In terms of biological role, cell wall formation. Catalyzes the transfer of a GlcNAc subunit on undecaprenyl-pyrophosphoryl-MurNAc-pentapeptide (lipid intermediate I) to form undecaprenyl-pyrophosphoryl-MurNAc-(pentapeptide)GlcNAc (lipid intermediate II). This is UDP-N-acetylglucosamine--N-acetylmuramyl-(pentapeptide) pyrophosphoryl-undecaprenol N-acetylglucosamine transferase from Clostridium kluyveri (strain ATCC 8527 / DSM 555 / NBRC 12016 / NCIMB 10680 / K1).